Here is a 302-residue protein sequence, read N- to C-terminus: L-aminoadipate-semialdehyde dehydrogenase-phosphopantetheinyl transferase (302 aa).

CoA-binding positions include arginine 44, 83 to 88 (RTGKGK), and 105 to 108 (NVSH). Positions 126 and 178 each coordinate Mg(2+). CoA is bound at residue 178-182 (ESFIK).

It belongs to the P-Pant transferase superfamily. AcpS family. As to quaternary structure, monomer. It depends on Mg(2+) as a cofactor.

The protein resides in the cytoplasm. Its subcellular location is the cytosol. It catalyses the reaction apo-[ACP] + CoA = holo-[ACP] + adenosine 3',5'-bisphosphate + H(+). The enzyme catalyses apo-[ACP] + acetyl-CoA = acetyl-[ACP] + adenosine 3',5'-bisphosphate + H(+). Functionally, catalyzes the post-translational modification of target proteins by phosphopantetheine. Can transfer the 4'-phosphopantetheine moiety from coenzyme A, regardless of whether the CoA is presented in the free thiol form or as an acetyl thioester, to a serine residue of a broad range of acceptors. The sequence is that of L-aminoadipate-semialdehyde dehydrogenase-phosphopantetheinyl transferase (aasdhppt) from Xenopus laevis (African clawed frog).